The chain runs to 291 residues: Taste receptor type 2 member 16 (291 aa).

Met1 is a topological domain (extracellular). A helical membrane pass occupies residues 2-22; that stretch reads IPIQLTVFFMIIYVLESLTII. The Cytoplasmic segment spans residues 23 to 41; it reads VQSSLIVAVLGREWLQVRR. A helical membrane pass occupies residues 42–62; sequence LMPVDMILISLGISRFCLQWA. The Extracellular portion of the chain corresponds to 63-84; sequence SMLNNFCSYFNLNYVLCNLTIT. A glycan (N-linked (GlcNAc...) asparagine) is linked at Asn80. Residues 85–105 form a helical membrane-spanning segment; it reads WEFFNILTFWLNSLLTVFYCI. The Cytoplasmic segment spans residues 106–125; that stretch reads KVSSFTHHIFLWLRWRILRL. Residues 126–146 form a helical membrane-spanning segment; the sequence is FPWILLGSLMITCVTIIPSAI. The Extracellular segment spans residues 147 to 182; the sequence is GNYIQIQLLTMEHLPRNSTVTDKLEKFHQYQFQAHT. N-linked (GlcNAc...) asparagine glycosylation is present at Asn163. Residues 183 to 203 form a helical membrane-spanning segment; that stretch reads VALVIPFILFLASTILLMASL. The Cytoplasmic portion of the chain corresponds to 204–228; sequence TKQIQHHSTGHCNPSMKAHFTALRS. The helical transmembrane segment at 229–249 threads the bilayer; the sequence is LAVLFIVFTSYFLTILITIIG. Residues 250–257 lie on the Extracellular side of the membrane; the sequence is TLFDKRCW. Residues 258 to 278 form a helical membrane-spanning segment; sequence LWVWEAFVYAFILMHSTSLML. Over 279–291 the chain is Cytoplasmic; the sequence is SSPTLKRILKGKC.

It belongs to the G-protein coupled receptor T2R family. As to quaternary structure, interacts with RTP3 and RTP4.

Its subcellular location is the cell membrane. In terms of biological role, receptor that may play a role in the perception of bitterness and is gustducin-linked. May play a role in sensing the chemical composition of the gastrointestinal content. The activity of this receptor may stimulate alpha gustducin, mediate PLC-beta-2 activation and lead to the gating of TRPM5. The sequence is that of Taste receptor type 2 member 16 (TAS2R16) from Pan troglodytes (Chimpanzee).